The chain runs to 877 residues: Translation initiation factor IF-2 (877 aa).

The segment covering 66–115 (PKKESTAKKTTKKDEVKKEEKKTTTKKESKNPAKAVSEKKDEVKKEEKQP) has biased composition (basic and acidic residues). Disordered regions lie at residues 66–127 (PKKE…LEEK), 187–208 (SDESLKRKKKEKKNHPVASKKE), and 241–290 (ENKP…KESE). Basic residues predominate over residues 192–201 (KRKKKEKKNH). The span at 245–265 (AQPTNKKQPNILKQSLNNSIN) shows a compositional bias: polar residues. A tr-type G domain is found at 376 to 543 (QRAPVITIMG…IVLLQADILE (168 aa)). Residues 385-392 (GHVDHGKT) are G1. 385–392 (GHVDHGKT) lines the GTP pocket. The interval 410-414 (GITQH) is G2. The G3 stretch occupies residues 431-434 (DTPG). GTP-binding positions include 431–435 (DTPGH) and 485–488 (NKMD). A G4 region spans residues 485-488 (NKMD). The G5 stretch occupies residues 521–523 (SAK).

Belongs to the TRAFAC class translation factor GTPase superfamily. Classic translation factor GTPase family. IF-2 subfamily.

The protein localises to the cytoplasm. Functionally, one of the essential components for the initiation of protein synthesis. Protects formylmethionyl-tRNA from spontaneous hydrolysis and promotes its binding to the 30S ribosomal subunits. Also involved in the hydrolysis of GTP during the formation of the 70S ribosomal complex. The polypeptide is Translation initiation factor IF-2 (Campylobacter lari (strain RM2100 / D67 / ATCC BAA-1060)).